The following is an 85-amino-acid chain: MQNDAGEVVDLYIPRKCSSTNRIIGAKDHASIQINFAEVDPTTGRMTGQYKTYAICGYIRQMGESDDCLKRLAIKDKIIDAKMDA.

It belongs to the eukaryotic ribosomal protein eS21 family. As to quaternary structure, component of the 40S small ribosomal subunit.

It localises to the cytoplasm. It is found in the cytosol. Its subcellular location is the rough endoplasmic reticulum. The polypeptide is Small ribosomal subunit protein eS21 (RPS21) (Branchiostoma belcheri (Amphioxus)).